The sequence spans 414 residues: Histidine--tRNA ligase (414 aa).

The protein belongs to the class-II aminoacyl-tRNA synthetase family. In terms of assembly, homodimer.

Its subcellular location is the cytoplasm. It carries out the reaction tRNA(His) + L-histidine + ATP = L-histidyl-tRNA(His) + AMP + diphosphate + H(+). The polypeptide is Histidine--tRNA ligase (Solibacter usitatus (strain Ellin6076)).